Here is a 369-residue protein sequence, read N- to C-terminus: Protein-glutamate methylesterase/protein-glutamine glutaminase 1 (369 aa).

The region spanning K3–D120 is the Response regulatory domain. Residue D54 is modified to 4-aspartylphosphate. Residues R136–S168 are compositionally biased toward low complexity. The interval R136 to V174 is disordered. The region spanning G177 to K369 is the CheB-type methylesterase domain. Catalysis depends on residues S189, H216, and D312.

The protein belongs to the CheB family. Phosphorylated by CheA. Phosphorylation of the N-terminal regulatory domain activates the methylesterase activity.

The protein resides in the cytoplasm. The enzyme catalyses [protein]-L-glutamate 5-O-methyl ester + H2O = L-glutamyl-[protein] + methanol + H(+). The catalysed reaction is L-glutaminyl-[protein] + H2O = L-glutamyl-[protein] + NH4(+). Involved in chemotaxis. Part of a chemotaxis signal transduction system that modulates chemotaxis in response to various stimuli. Catalyzes the demethylation of specific methylglutamate residues introduced into the chemoreceptors (methyl-accepting chemotaxis proteins or MCP) by CheR. Also mediates the irreversible deamidation of specific glutamine residues to glutamic acid. The protein is Protein-glutamate methylesterase/protein-glutamine glutaminase 1 of Oleidesulfovibrio alaskensis (strain ATCC BAA-1058 / DSM 17464 / G20) (Desulfovibrio alaskensis).